The following is a 248-amino-acid chain: Positive alginate biosynthesis regulatory protein (248 aa).

The Response regulatory domain occupies Asn2–Ser117. 4-aspartylphosphate is present on Asp54. In terms of domain architecture, HTH LytTR-type spans Ile142 to Gln247.

It functions in the pathway glycan biosynthesis; alginate biosynthesis [regulation]. Positive regulator of the algD gene, which codes for a GDP-mannose dehydrogenase, a key step enzyme in the alginate biosynthesis pathway. The protein is Positive alginate biosynthesis regulatory protein (algR) of Pseudomonas aeruginosa (strain ATCC 15692 / DSM 22644 / CIP 104116 / JCM 14847 / LMG 12228 / 1C / PRS 101 / PAO1).